The chain runs to 381 residues: Transcription termination factor 4, mitochondrial (381 aa).

Residues 1 to 42 constitute a mitochondrion transit peptide; the sequence is MAAFGRQVLDWHRLIPLTWACMARQTPHLGEQRRTTASLLRK. MTERF repeat units follow at residues 142–172, 177–204, 209–239, 245–270, and 290–318; these read CVVLKKSPQLLKLPIMQMRKRSSYLQKLGLG, KRVLYCCPEIFTMRQQDINDTVRLLKEK, VQQVTKILHSCPSVLREDLGQLEYKFQYAYF, HPDIVKSEYLQYSLTKIKQRHIYLER, and LKDILRVSEAEFLARTACTSVEEFQVFKK. The tract at residues 310–327 is dimerization with NSUN4; the sequence is VEEFQVFKKLLAREEEES. A disordered region spans residues 322–381; it reads REEEESESSTSDDKRASLDEDEDDDDEEDNDEDDNDEDDDDEDDDEAEDNDEDEDDDEEE. Over residues 340–381 the composition is skewed to acidic residues; that stretch reads DEDEDDDDEEDNDEDDNDEDDDDEDDDEAEDNDEDEDDDEEE.

It belongs to the mTERF family. In terms of assembly, heterodimer with NSUN4; this interaction may be required for NSUN4 recruitment to the mitochondrial large ribosomal subunit. The mature mitochondrial protein exists in 2 forms differing at the level of their N-terminus, one is starting at residue 43 and the other at residue 48.

It is found in the mitochondrion. Regulator of mitochondrial ribosome biogenesis and translation. Binds to mitochondrial ribosomal RNAs 16S, 12S and 7S and targets NSUN4 RNA methyltransferase to the mitochondrial large ribosomal subunit (39S). In Homo sapiens (Human), this protein is Transcription termination factor 4, mitochondrial (MTERF4).